The following is a 449-amino-acid chain: Clusterin (449 aa).

An N-terminal signal peptide occupies residues 1–22 (MMKTLLLFVGLLLTWESGQVLG). Residues 78 to 81 (KKKK) carry the Nuclear localization signal motif. N-linked (GlcNAc...) (complex) asparagine glycosylation is present at Asn-86. Cystine bridges form between Cys-102/Cys-313, Cys-113/Cys-305, Cys-116/Cys-302, Cys-121/Cys-295, and Cys-129/Cys-285. An N-linked (GlcNAc...) asparagine glycan is attached at Asn-103. Ser-133 carries the phosphoserine modification. N-linked (GlcNAc...) asparagine glycosylation is found at Asn-145, Asn-291, and Asn-354. Asn-374 carries an N-linked (GlcNAc...) (complex) asparagine glycan. The residue at position 396 (Ser-396) is a Phosphoserine. A Nuclear localization signal motif is present at residues 443-447 (RKKHR).

It belongs to the clusterin family. In terms of assembly, antiparallel disulfide-linked heterodimer of an alpha chain and a beta chain. Self-associates and forms higher oligomers. Interacts with a broad range of misfolded proteins, including APP, APOC2 and LYZ. Slightly acidic pH promotes interaction with misfolded proteins. Forms high-molecular weight oligomers upon interaction with misfolded proteins. Interacts with APOA1, LRP2, CLUAP1 and PON1. Interacts with the complement membrane attack complex. Interacts (via alpha chain) with XRCC6. Interacts with SYVN1, COMMD1, BTRC, CUL1 and with ubiquitin and SCF (SKP1-CUL1-F-box protein) E3 ubiquitin-protein ligase complexes. Interacts (via alpha chain) with BAX in stressed cells, where BAX undergoes a conformation change leading to association with the mitochondrial membrane. Does not interact with BAX in unstressed cells. Found in a complex with LTF, CLU, EPPIN and SEMG1. Interacts (immaturely glycosylated pre-secreted form) with HSPA5; this interaction promotes CLU stability and facilitates stress-induced CLU retrotranslocation from the secretory pathway to the mitochondria, thereby reducing stress-induced apoptosis by stabilizing mitochondrial membrane integrity. Interacts (isoform 4) with BCL2L1; this interaction releases and activates BAX and promotes cell death. Interacts with TGFBR2 and ACVR1. Interacts (secreted form) with STMN3; this interaction may act as an important modulator during neuronal differentiation. Interacts with VLDLR and LRP8. Proteolytically cleaved on its way through the secretory system, probably within the Golgi lumen. Proteolytic cleavage is not necessary for its chaperone activity. All non-secreted forms are not proteolytically cleaved. Chaperone activity of uncleaved forms is dependent on a non-reducing environment. In terms of processing, polyubiquitinated, leading to proteasomal degradation. Under cellular stress, the intracellular level of cleaved form is reduced due to proteasomal degradation. Post-translationally, extensively glycosylated with sulfated N-linked carbohydrates. About 30% of the protein mass is comprised of complex N-linked carbohydrate. Endoplasmic reticulum (ER) stress induces changes in glycosylation status and increases level of hypoglycosylated forms. Core carbohydrates are essential for chaperone activity. Non-secreted forms are hypoglycosylated or unglycosylated. Detected in blood plasma, cerebrospinal fluid, milk, seminal plasma and colon mucosa. Detected in the germinal center of colon lymphoid nodules and in colon parasympathetic ganglia of the Auerbach plexus (at protein level). Ubiquitous. Detected in brain, testis, ovary, liver and pancreas, and at lower levels in kidney, heart, spleen and lung.

Its subcellular location is the secreted. The protein resides in the cytoplasm. It localises to the nucleus. It is found in the mitochondrion membrane. The protein localises to the cytosol. Its subcellular location is the microsome. The protein resides in the endoplasmic reticulum. It localises to the mitochondrion. It is found in the perinuclear region. The protein localises to the cytoplasmic vesicle. Its subcellular location is the secretory vesicle. The protein resides in the chromaffin granule. Its function is as follows. Functions as extracellular chaperone that prevents aggregation of non native proteins. Prevents stress-induced aggregation of blood plasma proteins. Inhibits formation of amyloid fibrils by APP, APOC2, B2M, CALCA, CSN3, SNCA and aggregation-prone LYZ variants (in vitro). Does not require ATP. Maintains partially unfolded proteins in a state appropriate for subsequent refolding by other chaperones, such as HSPA8/HSC70. Does not refold proteins by itself. Binding to cell surface receptors triggers internalization of the chaperone-client complex and subsequent lysosomal or proteasomal degradation. Protects cells against apoptosis and against cytolysis by complement: inhibits assembly of the complement membrane attack complex (MAC) by preventing polymerization of C9 pore component of the MAC complex. Intracellular forms interact with ubiquitin and SCF (SKP1-CUL1-F-box protein) E3 ubiquitin-protein ligase complexes and promote the ubiquitination and subsequent proteasomal degradation of target proteins. Promotes proteasomal degradation of COMMD1 and IKBKB. Modulates NF-kappa-B transcriptional activity. A mitochondrial form suppresses BAX-dependent release of cytochrome c into the cytoplasm and inhibit apoptosis. Plays a role in the regulation of cell proliferation. An intracellular form suppresses stress-induced apoptosis by stabilizing mitochondrial membrane integrity through interaction with HSPA5. Secreted form does not affect caspase or BAX-mediated intrinsic apoptosis and TNF-induced NF-kappa-B-activity. Secreted form act as an important modulator during neuronal differentiation through interaction with STMN3. Plays a role in the clearance of immune complexes that arise during cell injury. Functionally, does not affect caspase or BAX-mediated intrinsic apoptosis and TNF-induced NF-kappa-B-activity. Does not affect caspase or BAX-mediated intrinsic apoptosis and TNF-induced NF-kappa-B-activity. Promotes cell death through interaction with BCL2L1 that releases and activates BAX. In Homo sapiens (Human), this protein is Clusterin.